A 365-amino-acid polypeptide reads, in one-letter code: Protein-glutamate methylesterase/protein-glutamine glutaminase 2 (365 aa).

The Response regulatory domain occupies 6–123; it reads RVLIIDDSAS…ADSLSDDAMR (118 aa). D57 bears the 4-aspartylphosphate mark. The CheB-type methylesterase domain maps to 173–359; the sequence is AKTTEMVVCV…PLDQIAREVL (187 aa). Catalysis depends on residues S185, H211, and D307.

It belongs to the CheB family. In terms of processing, phosphorylated by CheA. Phosphorylation of the N-terminal regulatory domain activates the methylesterase activity.

The protein resides in the cytoplasm. The catalysed reaction is [protein]-L-glutamate 5-O-methyl ester + H2O = L-glutamyl-[protein] + methanol + H(+). It catalyses the reaction L-glutaminyl-[protein] + H2O = L-glutamyl-[protein] + NH4(+). Its function is as follows. Involved in chemotaxis. Part of a chemotaxis signal transduction system that modulates chemotaxis in response to various stimuli. Catalyzes the demethylation of specific methylglutamate residues introduced into the chemoreceptors (methyl-accepting chemotaxis proteins or MCP) by CheR. Also mediates the irreversible deamidation of specific glutamine residues to glutamic acid. This Rhizobium johnstonii (strain DSM 114642 / LMG 32736 / 3841) (Rhizobium leguminosarum bv. viciae) protein is Protein-glutamate methylesterase/protein-glutamine glutaminase 2.